Here is a 130-residue protein sequence, read N- to C-terminus: Sec-independent protein translocase protein TatB (130 aa).

A helical membrane pass occupies residues 1 to 21 (MFDIGFTELTLIFIIGLVVLG). Composition is skewed to basic and acidic residues over residues 57 to 67 (QDMQERMEKQM) and 111 to 130 (PSDK…RRHD). The interval 57 to 130 (QDMQERMEKQ…NHDQDSRRHD (74 aa)) is disordered.

The protein belongs to the TatB family. The Tat system comprises two distinct complexes: a TatABC complex, containing multiple copies of TatA, TatB and TatC subunits, and a separate TatA complex, containing only TatA subunits. Substrates initially bind to the TatABC complex, which probably triggers association of the separate TatA complex to form the active translocon.

Its subcellular location is the cell inner membrane. Functionally, part of the twin-arginine translocation (Tat) system that transports large folded proteins containing a characteristic twin-arginine motif in their signal peptide across membranes. Together with TatC, TatB is part of a receptor directly interacting with Tat signal peptides. TatB may form an oligomeric binding site that transiently accommodates folded Tat precursor proteins before their translocation. The polypeptide is Sec-independent protein translocase protein TatB (Alcanivorax borkumensis (strain ATCC 700651 / DSM 11573 / NCIMB 13689 / SK2)).